A 346-amino-acid chain; its full sequence is Peripherin-2 (346 aa).

Topologically, residues 1 to 24 (MALLKVKFDQKKRVKLAQGLWLMN) are cytoplasmic. The chain crosses the membrane as a helical span at residues 25–43 (WLSVLAGIVLFSLGLFLKI). Topologically, residues 44–61 (ELRKRSEVMNNSESHFVP) are lumenal. N53 carries an N-linked (GlcNAc...) asparagine glycan. The chain crosses the membrane as a helical span at residues 62–80 (NSLIGVGVLSCVFNSLAGK). The Cytoplasmic segment spans residues 81–99 (ICYDALDPAKYAKWKPWLK). Residues 100–123 (PYLAVCIFFNVILFLVALCCFLLR) form a helical membrane-spanning segment. Topologically, residues 124–264 (GSLESTLAYG…LNYYSSLMNS (141 aa)) are lumenal. A glycan (N-linked (GlcNAc...) asparagine) is linked at N229. Residues 265–290 (MGVVTLLVWLFEVSITAGLRYLHTAL) form a helical membrane-spanning segment. Topologically, residues 291–346 (ESVSNPEDPECESEGWLLEKSVPETWKAFLESFKKLGKSNQVEAEGADAGPAPEAG) are cytoplasmic. The segment at 341–346 (PAPEAG) is interaction with MREG.

This sequence belongs to the PRPH2/ROM1 family. As to quaternary structure, homodimer; disulfide-linked. Forms a homotetramer. Forms a heterotetramer with ROM1. Homotetramer and heterotetramer core complexes go on to form higher order complexes by formation of intermolecular disulfide bonds. Interacts with MREG. Interacts with STX3 isoform 3B. Interacts with SNAP25. As to expression, expressed in the retina (at protein level).

The protein localises to the membrane. It is found in the cell projection. The protein resides in the cilium. It localises to the photoreceptor outer segment. Its subcellular location is the photoreceptor inner segment. In terms of biological role, essential for retina photoreceptor outer segment disk morphogenesis, may also play a role with ROM1 in the maintenance of outer segment disk structure. Required for the maintenance of retinal outer nuclear layer thickness. Required for the correct development and organization of the photoreceptor inner segment. This chain is Peripherin-2 (Prph2), found in Mus musculus (Mouse).